Here is a 173-residue protein sequence, read N- to C-terminus: MKLTSKGRYAVTAMLDVALHSQKSPVPLADISERQGISLSYLEQLFSKLRKAGLVASVRGPGGGYRLGAEASDIAVGTVIAAVDESVDATKCHGRADCQGGTRCLTHTLWRDLSSRISSFLNDITLGELMKDNEVLEISDRQDIDLAVNNGFAHKNTSTTTISAAPHGVNARS.

Residues Lys2–Lys131 enclose the HTH rrf2-type domain. Residues Leu28–Lys51 constitute a DNA-binding region (H-T-H motif). The [2Fe-2S] cluster site is built by Cys92, Cys98, and Cys104.

The cofactor is [2Fe-2S] cluster.

Regulates the transcription of several operons and genes involved in the biogenesis of Fe-S clusters and Fe-S-containing proteins. This chain is HTH-type transcriptional regulator IscR, found in Vibrio atlanticus (strain LGP32) (Vibrio splendidus (strain Mel32)).